Consider the following 501-residue polypeptide: ATP synthase subunit alpha (501 aa).

169–176 (GDRQTGKT) lines the ATP pocket.

The protein belongs to the ATPase alpha/beta chains family. F-type ATPases have 2 components, CF(1) - the catalytic core - and CF(0) - the membrane proton channel. CF(1) has five subunits: alpha(3), beta(3), gamma(1), delta(1), epsilon(1). CF(0) has three main subunits: a(1), b(2) and c(9-12). The alpha and beta chains form an alternating ring which encloses part of the gamma chain. CF(1) is attached to CF(0) by a central stalk formed by the gamma and epsilon chains, while a peripheral stalk is formed by the delta and b chains.

It is found in the cell membrane. It catalyses the reaction ATP + H2O + 4 H(+)(in) = ADP + phosphate + 5 H(+)(out). In terms of biological role, produces ATP from ADP in the presence of a proton gradient across the membrane. The alpha chain is a regulatory subunit. This chain is ATP synthase subunit alpha, found in Streptococcus pneumoniae serotype 2 (strain D39 / NCTC 7466).